The chain runs to 645 residues: 1,4-alpha-glucan branching enzyme GlgB (645 aa).

Aspartate 309 acts as the Nucleophile in catalysis. Catalysis depends on glutamate 352, which acts as the Proton donor. The tract at residues 619-645 (VKTRKGSKKQDGSKTKVRSNVTSRGKR) is disordered. Positions 636-645 (RSNVTSRGKR) are enriched in polar residues.

It belongs to the glycosyl hydrolase 13 family. GlgB subfamily. As to quaternary structure, monomer.

It catalyses the reaction Transfers a segment of a (1-&gt;4)-alpha-D-glucan chain to a primary hydroxy group in a similar glucan chain.. The protein operates within glycan biosynthesis; glycogen biosynthesis. Functionally, catalyzes the formation of the alpha-1,6-glucosidic linkages in glycogen by scission of a 1,4-alpha-linked oligosaccharide from growing alpha-1,4-glucan chains and the subsequent attachment of the oligosaccharide to the alpha-1,6 position. The sequence is that of 1,4-alpha-glucan branching enzyme GlgB from Bacillus cereus (strain 03BB102).